We begin with the raw amino-acid sequence, 491 residues long: MALQFQLNQTTPQTVTTDCVIVGIYADKTLSPTAKTLDAASGGRITALTARGDLTGKSGTSALLHDLNGVTAPRVLVVGLGEADKFGAGQYIKAVGNAVRALKDAPVTHALLTLSELPVKDRNAAWNIHQAVIAADHAAYRYTATLGTSRKKAEESGLITLAIHGQETSGLTLGQAIAEGVEYARALGNLPPNICTPAYLAETTAHFAATHPGATCEILDESNMEALGMGALLAVARGSANRPRLIVLKWNGGGDARPYVLVGKGITFDTGGVNLKTQGGIEEMKYDMCGGAAVIGTFVAAVKVRLPLNLIVIVPAVENAIDGNAYRPSDVITSMSGKTIEVGNTDAEGRLILCDALTYAERFKPEALIDVATLTGACMIALGRAATGLMTHHDDLANELLTAGEHVHDRAWRLPLWDEYQGLLDSTFADVYNIGGRWGGAITAGCFLSRFTEGQRWAHLDIAGSASNEGKRGMATGRPVGLLTQWLVDRC.

Mn(2+) is bound by residues Lys-264 and Asp-269. Lys-276 is a catalytic residue. Mn(2+) contacts are provided by Asp-287, Asp-346, and Glu-348. The active site involves Arg-350.

Belongs to the peptidase M17 family. Mn(2+) serves as cofactor.

It localises to the cytoplasm. It carries out the reaction Release of an N-terminal amino acid, Xaa-|-Yaa-, in which Xaa is preferably Leu, but may be other amino acids including Pro although not Arg or Lys, and Yaa may be Pro. Amino acid amides and methyl esters are also readily hydrolyzed, but rates on arylamides are exceedingly low.. It catalyses the reaction Release of an N-terminal amino acid, preferentially leucine, but not glutamic or aspartic acids.. In terms of biological role, presumably involved in the processing and regular turnover of intracellular proteins. Catalyzes the removal of unsubstituted N-terminal amino acids from various peptides. This is Probable cytosol aminopeptidase from Xylella fastidiosa (strain Temecula1 / ATCC 700964).